A 74-amino-acid polypeptide reads, in one-letter code: Large ribosomal subunit protein bL28 (74 aa).

The protein belongs to the bacterial ribosomal protein bL28 family.

The chain is Large ribosomal subunit protein bL28 from Desulforapulum autotrophicum (strain ATCC 43914 / DSM 3382 / VKM B-1955 / HRM2) (Desulfobacterium autotrophicum).